Here is a 287-residue protein sequence, read N- to C-terminus: 1-acyl-sn-glycerol-3-phosphate acyltransferase alpha (287 aa).

A signal peptide spans 1 to 26 (MELWPGAGTLLLLLFLLLLLLLPTLW). Residues 27-37 (FCSPSAKYFFK) are Lumenal-facing. The chain crosses the membrane as a helical span at residues 38 to 58 (MAFYNGWILFLAVLAIPVCAV). Residues 59-127 (RGRNVENMKI…PGRCVPIAKR (69 aa)) lie on the Cytoplasmic side of the membrane. Positions 104–109 (HQSSLD) match the HXXXXD motif motif. A helical membrane pass occupies residues 128-148 (ELLWAGSAGLACWLAGVIFID). At 149–287 (RKRTGDAISV…KPGGVGEAGL (139 aa)) the chain is on the lumenal side. Positions 178 to 181 (EGTR) match the EGTR motif motif.

It belongs to the 1-acyl-sn-glycerol-3-phosphate acyltransferase family.

It localises to the endoplasmic reticulum membrane. It catalyses the reaction a 1-acyl-sn-glycero-3-phosphate + an acyl-CoA = a 1,2-diacyl-sn-glycero-3-phosphate + CoA. It carries out the reaction 1-(9Z-octadecenoyl)-sn-glycero-3-phosphate + (9Z)-octadecenoyl-CoA = 1,2-di-(9Z-octadecenoyl)-sn-glycero-3-phosphate + CoA. The enzyme catalyses 1-(9Z-octadecenoyl)-sn-glycero-3-phosphate + hexadecanoyl-CoA = 1-(9Z)-octadecenoyl-2-hexadecanoyl-sn-glycero-3-phosphate + CoA. The catalysed reaction is heptadecanoyl-CoA + 1-(9Z-octadecenoyl)-sn-glycero-3-phosphate = 1-(9Z)-octadecenoyl-2-heptadecanoyl-sn-glycero-3-phosphate + CoA. It catalyses the reaction 1-(9Z-octadecenoyl)-sn-glycero-3-phosphate + octadecanoyl-CoA = 1-(9Z-octadecenoyl)-2-octadecanoyl-sn-glycero-3-phosphate + CoA. It carries out the reaction 1-(9Z-octadecenoyl)-sn-glycero-3-phosphate + (9Z,12Z)-octadecadienoyl-CoA = 1-(9Z)-octadecenoyl-2-(9Z,12Z)-octadecadienoyl-sn-glycero-3-phosphate + CoA. The enzyme catalyses 1-(9Z-octadecenoyl)-sn-glycero-3-phosphate + tetradecanoyl-CoA = 1-(9Z)-octadecenoyl-2-tetradecanoyl-sn-glycero-3-phosphate + CoA. The catalysed reaction is pentadecanoyl-CoA + 1-(9Z-octadecenoyl)-sn-glycero-3-phosphate = 1-(9Z)-octadecenoyl-2-pentadecanoyl-sn-glycero-3-phosphate + CoA. It catalyses the reaction 1-hexadecanoyl-sn-glycero-3-phosphate + (9Z)-octadecenoyl-CoA = 1-hexadecanoyl-2-(9Z-octadecenoyl)-sn-glycero-3-phosphate + CoA. It carries out the reaction 1-(9Z,12Z,15Z)-octadecatrienoyl-sn-glycero-3-phosphate + (9Z)-octadecenoyl-CoA = 1-(9Z,12Z,15Z)-octadecatrienoyl-2-(9Z)-octadecenoyl-sn-glycero-3-phosphate + CoA. The enzyme catalyses 1-(6Z,9Z,12Z-octadecatrienoyl)-sn-glycero-3-phosphate + (9Z)-octadecenoyl-CoA = (6Z,9Z,12Z)-octadecatrienoyl-2-(9Z)-octadecenoyl-sn-glycero-3-phosphate + CoA. The catalysed reaction is 1-eicosanoyl-sn-glycero-3-phosphate + (9Z)-octadecenoyl-CoA = 1-eicosanoyl-2-(9Z)-octadecenoyl-sn-glycero-3-phosphate + CoA. It catalyses the reaction 1-tetradecanoyl-sn-glycerol 3-phosphate + (9Z)-octadecenoyl-CoA = 1-tetradecanoyl-2-(9Z)-octadecenoyl-sn-glycero-3-phosphate + CoA. It carries out the reaction 1-(9Z-octadecenoyl)-sn-glycero-3-phosphate + (5Z,8Z,11Z,14Z)-eicosatetraenoyl-CoA = 1-(9Z)-octadecenoyl-2-(5Z,8Z,11Z,14Z)-eicosatetraenoyl-sn-glycero-3-phosphate + CoA. The enzyme catalyses 1-(9Z-octadecenoyl)-sn-glycero-3-phosphate + dodecanoyl-CoA = 1-(9Z)-octadecenoyl-2-dodecanoyl-sn-glycero-3-phosphate + CoA. The catalysed reaction is (6Z)-octadecenoyl-CoA + 1-(9Z-octadecenoyl)-sn-glycero-3-phosphate = 1-(9Z)-octadecenoyl-2-(6Z)-octadecenoyl-sn-glycero-3-phosphate + CoA. It catalyses the reaction (11Z)-octadecenoyl-CoA + 1-(9Z-octadecenoyl)-sn-glycero-3-phosphate = 1-(9Z)-octadecenoyl-2-(11Z)-octadecenoyl-sn-glycero-3-phosphate + CoA. It carries out the reaction (9Z)-hexadecenoyl-CoA + 1-(9Z-octadecenoyl)-sn-glycero-3-phosphate = 1-(9Z-octadecenoyl)-2-(9Z-hexadecenoyl)-sn-glycero-3-phosphate + CoA. Its pathway is phospholipid metabolism; CDP-diacylglycerol biosynthesis; CDP-diacylglycerol from sn-glycerol 3-phosphate: step 2/3. In terms of biological role, converts 1-acyl-sn-glycerol-3-phosphate (lysophosphatidic acid or LPA) into 1,2-diacyl-sn-glycerol-3-phosphate (phosphatidic acid or PA) by incorporating an acyl moiety at the sn-2 position of the glycerol backbone. The protein is 1-acyl-sn-glycerol-3-phosphate acyltransferase alpha (AGPAT1) of Bos taurus (Bovine).